A 307-amino-acid chain; its full sequence is UPF0749 protein MT1871 (307 aa).

A signal peptide spans 1 to 23; the sequence is MAESDRLLGGYDPNAGYSAHAGA. Helical transmembrane passes span 67-87 and 152-172; these read VSWM…AAAV and VLSL…VTVT.

This sequence belongs to the UPF0749 family.

The protein localises to the cell membrane. The protein is UPF0749 protein MT1871 of Mycobacterium tuberculosis (strain CDC 1551 / Oshkosh).